Consider the following 60-residue polypeptide: UPF0434 protein Mfla_2088 (60 aa).

It belongs to the UPF0434 family.

This chain is UPF0434 protein Mfla_2088, found in Methylobacillus flagellatus (strain ATCC 51484 / DSM 6875 / VKM B-1610 / KT).